The sequence spans 251 residues: UPF0309 protein SGR_3073 (251 aa).

Residues 36–221 (VADTVASGGR…EQLVARGIEP (186 aa)) enclose the SIS domain.

It belongs to the UPF0309 family.

The chain is UPF0309 protein SGR_3073 from Streptomyces griseus subsp. griseus (strain JCM 4626 / CBS 651.72 / NBRC 13350 / KCC S-0626 / ISP 5235).